The chain runs to 142 residues: MSTESTEERILAALEEDAQASYAAIAERADVSKPTVRKYIDQLESDGVIVGYSADVDPKKLSGQSIAMVGIDVASEQYVEATRTLQELDSVQALYSSSGDHMLMAEVRAADGDALGDVISDEVLAIDGVTAAHPSFLQERLK.

The HTH asnC-type domain occupies 1–72 (MSTESTEERI…GQSIAMVGID (72 aa)). A DNA-binding region (H-T-H motif) is located at residues 22–41 (YAAIAERADVSKPTVRKYID).

In terms of biological role, transcription factor that regulates genes involved in amino acid metabolism. Represses the aspB3 gene, coding for an aspartate transaminase, in the presence of L-aspartate. Another target gene is the basal transcriptional regulator tfbB. Also binds its own promoter. In Halobacterium salinarum (strain ATCC 29341 / DSM 671 / R1), this protein is HTH-type transcriptional regulator LrpA1 (lrpA1).